The following is a 238-amino-acid chain: Ribonuclease PH (238 aa).

Phosphate-binding positions include R86 and 124–126 (GTR).

The protein belongs to the RNase PH family. Homohexameric ring arranged as a trimer of dimers.

It catalyses the reaction tRNA(n+1) + phosphate = tRNA(n) + a ribonucleoside 5'-diphosphate. In terms of biological role, phosphorolytic 3'-5' exoribonuclease that plays an important role in tRNA 3'-end maturation. Removes nucleotide residues following the 3'-CCA terminus of tRNAs; can also add nucleotides to the ends of RNA molecules by using nucleoside diphosphates as substrates, but this may not be physiologically important. Probably plays a role in initiation of 16S rRNA degradation (leading to ribosome degradation) during starvation. In Caulobacter vibrioides (strain ATCC 19089 / CIP 103742 / CB 15) (Caulobacter crescentus), this protein is Ribonuclease PH.